Consider the following 428-residue polypeptide: Divergent protein kinase domain 1A (428 aa).

The Cytoplasmic portion of the chain corresponds to 1 to 27 (MARSLCAGAWLRKPHYLQARLSYMRVK). Residues 28 to 48 (YLFFSWLVVFVGSWIIYVQYS) form a helical membrane-spanning segment. Topologically, residues 49 to 428 (TYTELCRGKD…WKKISYTNDS (380 aa)) are lumenal.

The protein belongs to the DIPK family. In terms of processing, among the many cysteines in the lumenal domain, most are probably involved in disulfide bonds. As to expression, ubiquitous.

Its subcellular location is the endoplasmic reticulum membrane. In Mus musculus (Mouse), this protein is Divergent protein kinase domain 1A (Dipk1a).